We begin with the raw amino-acid sequence, 274 residues long: Large ribosomal subunit protein uL2 (274 aa).

Residues 221 to 256 are disordered; that stretch reads RGTAMNPVDHPHGGGEGRNFGKHPVTPWGVPTKGYK.

The protein belongs to the universal ribosomal protein uL2 family. As to quaternary structure, part of the 50S ribosomal subunit. Forms a bridge to the 30S subunit in the 70S ribosome.

Functionally, one of the primary rRNA binding proteins. Required for association of the 30S and 50S subunits to form the 70S ribosome, for tRNA binding and peptide bond formation. It has been suggested to have peptidyltransferase activity; this is somewhat controversial. Makes several contacts with the 16S rRNA in the 70S ribosome. The protein is Large ribosomal subunit protein uL2 of Hahella chejuensis (strain KCTC 2396).